The following is a 303-amino-acid chain: Probable serine acetyltransferase 1 (303 aa).

2 disordered regions span residues 1–36 (MTAG…ESDA) and 271–290 (NPAR…ESMD).

Belongs to the transferase hexapeptide repeat family. In terms of assembly, homomultimer.

It catalyses the reaction L-serine + acetyl-CoA = O-acetyl-L-serine + CoA. It functions in the pathway amino-acid biosynthesis; L-cysteine biosynthesis; L-cysteine from L-serine: step 1/2. In Oryza sativa subsp. japonica (Rice), this protein is Probable serine acetyltransferase 1 (SAT1).